Here is a 511-residue protein sequence, read N- to C-terminus: ATP synthase subunit alpha (511 aa).

169–176 (GDRKTGKT) lines the ATP pocket.

This sequence belongs to the ATPase alpha/beta chains family. As to quaternary structure, F-type ATPases have 2 components, CF(1) - the catalytic core - and CF(0) - the membrane proton channel. CF(1) has five subunits: alpha(3), beta(3), gamma(1), delta(1), epsilon(1). CF(0) has three main subunits: a(1), b(2) and c(9-12). The alpha and beta chains form an alternating ring which encloses part of the gamma chain. CF(1) is attached to CF(0) by a central stalk formed by the gamma and epsilon chains, while a peripheral stalk is formed by the delta and b chains.

The protein localises to the cell membrane. The enzyme catalyses ATP + H2O + 4 H(+)(in) = ADP + phosphate + 5 H(+)(out). In terms of biological role, produces ATP from ADP in the presence of a proton gradient across the membrane. The alpha chain is a regulatory subunit. The protein is ATP synthase subunit alpha of Latilactobacillus sakei subsp. sakei (strain 23K) (Lactobacillus sakei subsp. sakei).